The primary structure comprises 224 residues: Elongation factor 1-beta 2 (224 aa).

The residue at position 2 (A2) is an N-acetylalanine. In terms of domain architecture, GST C-terminal spans 14 to 65; that stretch reads VKSVEEHLAGKTYISGDQLSVDDVKVYAAVPVKPSDAFPNASKWYESVASQL. A disordered region spans residues 89 to 139; the sequence is EAEAPAAAADDDDDMDLFGDETEEEKKAAEEREAAKKDTKKPKESGKSSVL. Acidic residues predominate over residues 97–111; the sequence is ADDDDDMDLFGDETE. The segment covering 112–134 has biased composition (basic and acidic residues); that stretch reads EEKKAAEEREAAKKDTKKPKESG.

It belongs to the EF-1-beta/EF-1-delta family. EF-1 is composed of 4 subunits: alpha, beta (1B-alpha=beta'), delta (1B-beta), and gamma (1B-gamma).

Functionally, EF-1-beta and EF-1-delta stimulate the exchange of GDP bound to EF-1-alpha to GTP. The sequence is that of Elongation factor 1-beta 2 from Arabidopsis thaliana (Mouse-ear cress).